Here is a 408-residue protein sequence, read N- to C-terminus: Probable pectate lyase 18 (408 aa).

A signal peptide spans methionine 1 to serine 24. An N-linked (GlcNAc...) asparagine glycan is attached at asparagine 42. Ca(2+)-binding residues include aspartate 206, aspartate 230, and aspartate 234. The active site involves arginine 286.

It belongs to the polysaccharide lyase 1 family. Requires Ca(2+) as cofactor. Expressed in flowers, but not in leaves.

It catalyses the reaction Eliminative cleavage of (1-&gt;4)-alpha-D-galacturonan to give oligosaccharides with 4-deoxy-alpha-D-galact-4-enuronosyl groups at their non-reducing ends.. It functions in the pathway glycan metabolism; pectin degradation; 2-dehydro-3-deoxy-D-gluconate from pectin: step 2/5. The sequence is that of Probable pectate lyase 18 from Arabidopsis thaliana (Mouse-ear cress).